Reading from the N-terminus, the 1118-residue chain is Cytospin-A (1118 aa).

4 disordered regions span residues 1 to 63 (MKKA…AGMA), 75 to 176 (KKST…NQIS), 294 to 324 (SLSP…GSVE), and 359 to 391 (SSDD…NASE). Residues 80-90 (SSAAPSAPAPA) show a composition bias toward low complexity. A compositionally biased stretch (polar residues) spans 93–117 (ISENKSKISTGTSSSAKRSTSAGNK). Over residues 120 to 131 (SSTRERLRERTR) the composition is skewed to basic and acidic residues. Over residues 133-145 (NQSKKLPSVSQGA) the composition is skewed to polar residues. The segment covering 158 to 171 (TAAEGDIRMSKSKS) has biased composition (basic and acidic residues). Residues 168-281 (KSKSDNQISD…LNALGFSLEQ (114 aa)) are a coiled coil. The span at 294–304 (SLSPEITPGNQ) shows a compositional bias: polar residues. Residues 359–373 (SSDDALDAPSSSESE) are compositionally biased toward low complexity. Residues Ser385, Ser386, and Ser390 each carry the phosphoserine modification. Coiled coils occupy residues 395-450 (ACLT…MESL) and 488-808 (RYME…RGRV). Ser869, Ser882, and Ser888 each carry phosphoserine. Residues 921–999 (TSSTSRPASL…STRSRIREER (79 aa)) form a disordered region. A compositionally biased stretch (basic and acidic residues) spans 947 to 957 (RSSEEMKRDIS). Positions 972 to 992 (TTSPQLSLSSSPTASVTPSTR) are enriched in low complexity. Positions 1012–1117 (GSKRNALLKW…YVTAIYKYFE (106 aa)) constitute a Calponin-homology (CH) domain.

The protein belongs to the cytospin-A family. May interact with both microtubules and actin cytoskeleton.

The protein localises to the cytoplasm. It localises to the cytoskeleton. It is found in the spindle. The protein resides in the cell junction. Its subcellular location is the gap junction. Involved in cytokinesis and spindle organization. May play a role in actin cytoskeleton organization and microtubule stabilization and hence required for proper cell adhesion and migration. This chain is Cytospin-A (Specc1l), found in Mus musculus (Mouse).